A 338-amino-acid polypeptide reads, in one-letter code: Glycerol-3-phosphate dehydrogenase [NAD(P)+] (338 aa).

S14, Y15, H35, and K109 together coordinate NADPH. Residues K109, G138, and T140 each coordinate sn-glycerol 3-phosphate. A142 serves as a coordination point for NADPH. The sn-glycerol 3-phosphate site is built by K194, D247, S257, R258, and N259. The Proton acceptor role is filled by K194. R258 is a binding site for NADPH. The NADPH site is built by V282 and E284.

The protein belongs to the NAD-dependent glycerol-3-phosphate dehydrogenase family.

It localises to the cytoplasm. The enzyme catalyses sn-glycerol 3-phosphate + NAD(+) = dihydroxyacetone phosphate + NADH + H(+). It carries out the reaction sn-glycerol 3-phosphate + NADP(+) = dihydroxyacetone phosphate + NADPH + H(+). It participates in membrane lipid metabolism; glycerophospholipid metabolism. In terms of biological role, catalyzes the reduction of the glycolytic intermediate dihydroxyacetone phosphate (DHAP) to sn-glycerol 3-phosphate (G3P), the key precursor for phospholipid synthesis. The protein is Glycerol-3-phosphate dehydrogenase [NAD(P)+] of Shewanella putrefaciens (strain CN-32 / ATCC BAA-453).